Reading from the N-terminus, the 150-residue chain is Arginine repressor (150 aa).

The protein belongs to the ArgR family.

The protein resides in the cytoplasm. The protein operates within amino-acid biosynthesis; L-arginine biosynthesis [regulation]. Functionally, regulates arginine biosynthesis genes. This chain is Arginine repressor, found in Desulfitobacterium hafniense (strain DSM 10664 / DCB-2).